The following is a 497-amino-acid chain: Acetyl-coenzyme A carboxylase carboxyl transferase subunit beta, chloroplastic (497 aa).

A CoA carboxyltransferase N-terminal domain is found at 230 to 497 (LWVQCENCYG…FFPLNQNSIK (268 aa)). Zn(2+)-binding residues include Cys-234, Cys-237, Cys-253, and Cys-256. The C4-type zinc finger occupies 234-256 (CENCYGLNYKKFLKSKMNICEQC).

The protein belongs to the AccD/PCCB family. Acetyl-CoA carboxylase is a heterohexamer composed of biotin carboxyl carrier protein, biotin carboxylase and 2 subunits each of ACCase subunit alpha and ACCase plastid-coded subunit beta (accD). It depends on Zn(2+) as a cofactor.

The protein resides in the plastid. It localises to the chloroplast stroma. The catalysed reaction is N(6)-carboxybiotinyl-L-lysyl-[protein] + acetyl-CoA = N(6)-biotinyl-L-lysyl-[protein] + malonyl-CoA. It participates in lipid metabolism; malonyl-CoA biosynthesis; malonyl-CoA from acetyl-CoA: step 1/1. Component of the acetyl coenzyme A carboxylase (ACC) complex. Biotin carboxylase (BC) catalyzes the carboxylation of biotin on its carrier protein (BCCP) and then the CO(2) group is transferred by the transcarboxylase to acetyl-CoA to form malonyl-CoA. The chain is Acetyl-coenzyme A carboxylase carboxyl transferase subunit beta, chloroplastic from Carica papaya (Papaya).